The chain runs to 170 residues: UPF0201 protein MJ1564 (170 aa).

Residues 133–148 (NEDELEEEEEKEDSEE) are compositionally biased toward acidic residues. Positions 133-170 (NEDELEEEEEKEDSEEIKEGHKEENNLKIKVIDNSSGD) are disordered. Residues 149–163 (IKEGHKEENNLKIKV) are compositionally biased toward basic and acidic residues.

It belongs to the UPF0201 family.

This is UPF0201 protein MJ1564 from Methanocaldococcus jannaschii (strain ATCC 43067 / DSM 2661 / JAL-1 / JCM 10045 / NBRC 100440) (Methanococcus jannaschii).